Reading from the N-terminus, the 128-residue chain is U24-ctenitoxin-Pn1a (128 aa).

2 Thyroglobulin type-1 domains span residues 4–67 (KSDC…ECGC) and 72–127 (KERK…SLKC). Intrachain disulfides connect cysteine 7-cysteine 27, cysteine 38-cysteine 45, cysteine 47-cysteine 67, and cysteine 107-cysteine 127.

Expressed by the venom gland.

Its subcellular location is the secreted. Functionally, cysteine proteinase inhibitor. The polypeptide is U24-ctenitoxin-Pn1a (Phoneutria nigriventer (Brazilian armed spider)).